Reading from the N-terminus, the 235-residue chain is Urease accessory protein UreF (235 aa).

The protein belongs to the UreF family. As to quaternary structure, ureD, UreF and UreG form a complex that acts as a GTP-hydrolysis-dependent molecular chaperone, activating the urease apoprotein by helping to assemble the nickel containing metallocenter of UreC. The UreE protein probably delivers the nickel.

It is found in the cytoplasm. Required for maturation of urease via the functional incorporation of the urease nickel metallocenter. The polypeptide is Urease accessory protein UreF (Ureaplasma parvum serovar 3 (strain ATCC 27815 / 27 / NCTC 11736)).